Reading from the N-terminus, the 620-residue chain is Sterile alpha motif domain-containing protein 15 (620 aa).

The segment at M1–L394 is disordered. Composition is skewed to basic and acidic residues over residues T62 to R83, I106 to E125, and T135 to S180. The span at T181–Q191 shows a compositional bias: polar residues. Over residues R233–Q242 the composition is skewed to basic residues. Positions L261 to E270 are enriched in acidic residues. Composition is skewed to basic and acidic residues over residues E271–P286, K295–P315, F323–D337, and I347–S382. One can recognise an SAM domain in the interval W480–I543. The segment covering E594 to A604 has biased composition (basic and acidic residues). The tract at residues E594–T620 is disordered. Positions S609–T620 are enriched in acidic residues.

In Mus musculus (Mouse), this protein is Sterile alpha motif domain-containing protein 15 (Samd15).